Here is a 364-residue protein sequence, read N- to C-terminus: Flavonoid 3'-O-methyltransferase 3 (364 aa).

Asp-232 serves as a coordination point for S-adenosyl-L-methionine. The active-site Proton acceptor is the His-270.

It belongs to the class I-like SAM-binding methyltransferase superfamily. Cation-independent O-methyltransferase family. As to quaternary structure, homodimer.

It catalyses the reaction quercetin + S-adenosyl-L-methionine = isorhamnetin + S-adenosyl-L-homocysteine + H(+). The catalysed reaction is luteolin + S-adenosyl-L-methionine = chrysoeriol + S-adenosyl-L-homocysteine + H(+). It carries out the reaction a 3'-hydroxyflavone + S-adenosyl-L-methionine = a 3'-methoxyflavone + S-adenosyl-L-homocysteine + H(+). The enzyme catalyses rhamnetin + S-adenosyl-L-methionine = rhamnacene + S-adenosyl-L-homocysteine + H(+). It catalyses the reaction 3',4',7,8-tetrahydroxyflavone + S-adenosyl-L-methionine = 4',7,8-trihydroxy-3'-methoxyflavone-7-olate + S-adenosyl-L-homocysteine + H(+). The catalysed reaction is taxifolin + S-adenosyl-L-methionine = taxifolin 3'-methyl ether + S-adenosyl-L-homocysteine + H(+). Its pathway is flavonoid metabolism. Flavonoid 3'-O-methyltransferase involved in the biosynthesis of polymethoxylated flavonoids natural products such as pebrellin, aroma compounds which contribute to the flavor of peppermint, and exhibit pharmacological activities such as anti-allergic, anti-oxidant, antibacterial, anti-proliferative, and anti-inflammatory effects. Catalyzes S-adenosylmethionine-dependent regioselective 3'-O-methylation of flavonoids; active on various hydroxylated flavonoid substrates, including quercetin, rhamnetin, luteolin (LUT), 7,8,3'4'-tetrahydroxy-flavone and taxifolin, and, with a lower efficiency, eupatorin and hesperetin. This Mentha piperita (Peppermint) protein is Flavonoid 3'-O-methyltransferase 3.